The primary structure comprises 347 residues: Quinolinate synthase (347 aa).

Iminosuccinate is bound by residues His-47 and Ser-68. Cys-113 is a [4Fe-4S] cluster binding site. Residues 139–141 (YAN) and Ser-156 each bind iminosuccinate. Cys-200 lines the [4Fe-4S] cluster pocket. Residues 226 to 228 (HPE) and Thr-243 each bind iminosuccinate. Cys-297 serves as a coordination point for [4Fe-4S] cluster.

Belongs to the quinolinate synthase family. Type 1 subfamily. It depends on [4Fe-4S] cluster as a cofactor.

It localises to the cytoplasm. The enzyme catalyses iminosuccinate + dihydroxyacetone phosphate = quinolinate + phosphate + 2 H2O + H(+). Its pathway is cofactor biosynthesis; NAD(+) biosynthesis; quinolinate from iminoaspartate: step 1/1. Its function is as follows. Catalyzes the condensation of iminoaspartate with dihydroxyacetone phosphate to form quinolinate. This chain is Quinolinate synthase, found in Escherichia coli O157:H7.